The sequence spans 161 residues: Small ribosomal subunit protein uS9 (161 aa).

Disordered regions lie at residues 1 to 27 and 142 to 161; these read MAQI…APKA and KERK…FSKR.

The protein belongs to the universal ribosomal protein uS9 family.

This is Small ribosomal subunit protein uS9 from Clavibacter michiganensis subsp. michiganensis (strain NCPPB 382).